The primary structure comprises 365 residues: Succinyl-diaminopimelate desuccinylase (365 aa).

His65 lines the Zn(2+) pocket. The active site involves Asp67. Position 96 (Asp96) interacts with Zn(2+). Catalysis depends on Glu126, which acts as the Proton acceptor. Residues Glu127, Glu155, and His340 each coordinate Zn(2+).

It belongs to the peptidase M20A family. DapE subfamily. As to quaternary structure, homodimer. Zn(2+) is required as a cofactor. Requires Co(2+) as cofactor.

The catalysed reaction is N-succinyl-(2S,6S)-2,6-diaminopimelate + H2O = (2S,6S)-2,6-diaminopimelate + succinate. Its pathway is amino-acid biosynthesis; L-lysine biosynthesis via DAP pathway; LL-2,6-diaminopimelate from (S)-tetrahydrodipicolinate (succinylase route): step 3/3. Catalyzes the hydrolysis of N-succinyl-L,L-diaminopimelic acid (SDAP), forming succinate and LL-2,6-diaminopimelate (DAP), an intermediate involved in the bacterial biosynthesis of lysine and meso-diaminopimelic acid, an essential component of bacterial cell walls. The chain is Succinyl-diaminopimelate desuccinylase from Campylobacter jejuni subsp. jejuni serotype O:23/36 (strain 81-176).